We begin with the raw amino-acid sequence, 994 residues long: MRPVALLLLPSLLALLAHGLSLEAPTVGKGQAPGIEETDGELTAAPTPEQPERGVHFVTTAPTLKLLNHHPLLEEFLQEGLEKGDEELRPALPFQPDPPAPFTPSPLPRLANQDSRPVFTSPTPAMAAVPTQPQSKEGPWSPESESPMLRITAPLPPGPSMAVPTLGPGEIASTTPPSRAWTPTQEGPGDMGRPWVAEVVSQGAGIGIQGTITSSTASGDDEETTTTTTIITTTITTVQTPGPCSWNFSGPEGSLDSPTDLSSPTDVGLDCFFYISVYPGYGVEIKVQNISLREGETVTVEGLGGPDPLPLANQSFLLRGQVIRSPTHQAALRFQSLPPPAGPGTFHFHYQAYLLSCHFPRRPAYGDVTVTSLHPGGSARFHCATGYQLKGARHLTCLNATQPFWDSKEPVCIAACGGVIRNATTGRIVSPGFPGNYSNNLTCHWLLEAPEGQRLHLHFEKVSLAEDDDRLIIRNGDNVEAPPVYDSYEVEYLPIEGLLSSGKHFFVELSTDSSGAAAGMALRYEAFQQGHCYEPFVKYGNFSSSTPTYPVGTTVEFSCDPGYTLEQGSIIIECVDPHDPQWNETEPACRAVCSGEITDSAGVVLSPNWPEPYGRGQDCIWGVHVEEDKRIMLDIRVLRIGPGDVLTFYDGDDLTARVLGQYSGPRSHFKLFTSMADVTIQFQSDPGTSVLGYQQGFVIHFFEVPRNDTCPELPEIPNGWKSPSQPELVHGTVVTYQCYPGYQVVGSSVLMCQWDLTWSEDLPSCQRVTSCHDPGDVEHSRRLISSPKFPVGATVQYICDQGFVLMGSSILTCHDRQAGSPKWSDRAPKCLLEQLKPCHGLSAPENGARSPEKQLHPAGATIHFSCAPGYVLKGQASIKCVPGHPSHWSDPPPICRAASLDGFYNSRSLDVAKAPAASSTLDAAHIAAAIFLPLVAMVLLVGGVYFYFSRLQGKSSLQLPRPRPRPYNRITIESAFDNPTYETGSLSFAGDERI.

The first 19 residues, 1–19 (MRPVALLLLPSLLALLAHG), serve as a signal peptide directing secretion. The Extracellular portion of the chain corresponds to 20–925 (LSLEAPTVGK…AASSTLDAAH (906 aa)). A disordered region spans residues 28–50 (GKGQAPGIEETDGELTAAPTPEQ). O-glycosylated at two sites stretches follow at residues 38–47 (TDGELTAAPT) and 59–63 (TTAPT). 3 disordered regions span residues 88 to 146 (LRPA…ESES), 171 to 191 (IAST…PGDM), and 241 to 261 (PGPC…PTDL). Positions 93 to 107 (PFQPDPPAPFTPSPL) are enriched in pro residues. Composition is skewed to polar residues over residues 112 to 123 (NQDSRPVFTSPT) and 172 to 185 (ASTT…TPTQ). Asparagine 289 carries N-linked (GlcNAc...) asparagine glycosylation. The 60-residue stretch at 355-414 (LSCHFPRRPAYGDVTVTSLHPGGSARFHCATGYQLKGARHLTCLNATQPFWDSKEPVCIA) folds into the Sushi 1 domain. 12 cysteine pairs are disulfide-bonded: cysteine 357–cysteine 397, cysteine 383–cysteine 412, cysteine 416–cysteine 443, cysteine 532–cysteine 574, cysteine 559–cysteine 589, cysteine 593–cysteine 619, cysteine 710–cysteine 752, cysteine 738–cysteine 765, cysteine 771–cysteine 813, cysteine 799–cysteine 830, cysteine 838–cysteine 880, and cysteine 866–cysteine 895. 3 N-linked (GlcNAc...) asparagine glycosylation sites follow: asparagine 399, asparagine 436, and asparagine 541. Positions 416–527 (CGGVIRNATT…AGMALRYEAF (112 aa)) constitute a CUB 1 domain. One can recognise a Sushi 2 domain in the interval 530–591 (GHCYEPFVKY…WNETEPACRA (62 aa)). The region spanning 593-704 (CSGEITDSAG…QGFVIHFFEV (112 aa)) is the CUB 2 domain. Sushi domains are found at residues 708–767 (DTCP…SCQR), 769–832 (TSCH…KCLL), and 836–897 (KPCH…ICRA). Residues 926-946 (IAAAIFLPLVAMVLLVGGVYF) traverse the membrane as a helical segment. Residues 947–994 (YFSRLQGKSSLQLPRPRPRPYNRITIESAFDNPTYETGSLSFAGDERI) lie on the Cytoplasmic side of the membrane.

It belongs to the SEZ6 family. Glycosylated.

It is found in the cell membrane. In terms of biological role, may play a role in cell-cell recognition and in neuronal membrane signaling. Seems to be important for the achievement of the necessary balance between dendrite elongation and branching during the elaboration of a complex dendritic arbor. Involved in the development of appropriate excitatory synaptic connectivity. The protein is Seizure protein 6 homolog (SEZ6) of Homo sapiens (Human).